Consider the following 537-residue polypeptide: Protein ST7 homolog (537 aa).

A helical transmembrane segment spans residues 15-35 (FYVALTGTSSLISGLILIFEW). Residues 61–111 (SDGQSESSNGSGSSSSSGSSSSSNGGAGGGGSGGAGASGSGSATTSTGTQM) form a disordered region. Residues 67 to 84 (SSNGSGSSSSSGSSSSSN) show a composition bias toward low complexity. Positions 85 to 99 (GGAGGGGSGGAGASG) are enriched in gly residues. The span at 100 to 109 (SGSATTSTGT) shows a compositional bias: low complexity. A helical membrane pass occupies residues 472 to 492 (LPFFILFTAGLCSITALLALA).

It belongs to the ST7 family.

Its subcellular location is the membrane. The polypeptide is Protein ST7 homolog (Drosophila melanogaster (Fruit fly)).